Reading from the N-terminus, the 417-residue chain is Peptidyl-Asp metalloendopeptidase (417 aa).

Positions 1–25 (MLSRSIGKAAGGLVLGLSVAAAAHA) are cleaved as a signal peptide. His-327 provides a ligand contact to Zn(2+). Glu-328 is an active-site residue. His-331 and His-337 together coordinate Zn(2+).

It belongs to the peptidase M72 family. Requires Zn(2+) as cofactor.

The catalysed reaction is Cleavage of Xaa-|-Asp, Xaa-|-Glu and Xaa-|-cysteic acid bonds.. Functionally, metalloprotease, specifically cleaves on the N-terminal side of aspartyl, glutamyl and cysteic acid residues. The sequence is that of Peptidyl-Asp metalloendopeptidase from Stenotrophomonas maltophilia (strain K279a).